Reading from the N-terminus, the 295-residue chain is Phosphatidylserine decarboxylase proenzyme (295 aa).

Active-site charge relay system; for autoendoproteolytic cleavage activity residues include Asp113, His169, and Ser256. Ser256 (schiff-base intermediate with substrate; via pyruvic acid; for decarboxylase activity) is an active-site residue. Pyruvic acid (Ser); by autocatalysis is present on Ser256.

The protein belongs to the phosphatidylserine decarboxylase family. PSD-B subfamily. Prokaryotic type II sub-subfamily. In terms of assembly, heterodimer of a large membrane-associated beta subunit and a small pyruvoyl-containing alpha subunit. Pyruvate serves as cofactor. Post-translationally, is synthesized initially as an inactive proenzyme. Formation of the active enzyme involves a self-maturation process in which the active site pyruvoyl group is generated from an internal serine residue via an autocatalytic post-translational modification. Two non-identical subunits are generated from the proenzyme in this reaction, and the pyruvate is formed at the N-terminus of the alpha chain, which is derived from the carboxyl end of the proenzyme. The autoendoproteolytic cleavage occurs by a canonical serine protease mechanism, in which the side chain hydroxyl group of the serine supplies its oxygen atom to form the C-terminus of the beta chain, while the remainder of the serine residue undergoes an oxidative deamination to produce ammonia and the pyruvoyl prosthetic group on the alpha chain. During this reaction, the Ser that is part of the protease active site of the proenzyme becomes the pyruvoyl prosthetic group, which constitutes an essential element of the active site of the mature decarboxylase.

Its subcellular location is the cell membrane. The catalysed reaction is a 1,2-diacyl-sn-glycero-3-phospho-L-serine + H(+) = a 1,2-diacyl-sn-glycero-3-phosphoethanolamine + CO2. It functions in the pathway phospholipid metabolism; phosphatidylethanolamine biosynthesis; phosphatidylethanolamine from CDP-diacylglycerol: step 2/2. Its function is as follows. Catalyzes the formation of phosphatidylethanolamine (PtdEtn) from phosphatidylserine (PtdSer). The sequence is that of Phosphatidylserine decarboxylase proenzyme from Clostridium novyi (strain NT).